A 373-amino-acid chain; its full sequence is sn-glycerol-3-phosphate import ATP-binding protein UgpC (373 aa).

The ABC transporter domain occupies 4 to 235 (LTLSNITKSY…PASVFVATFI (232 aa)). 37–44 (GPSGCGKS) serves as a coordination point for ATP.

Belongs to the ABC transporter superfamily. sn-glycerol-3-phosphate importer (TC 3.A.1.1.3) family. In terms of assembly, the complex is composed of two ATP-binding proteins (UgpC), two transmembrane proteins (UgpA and UgpE) and a solute-binding protein (UgpB).

The protein resides in the cell inner membrane. It catalyses the reaction sn-glycerol 3-phosphate(out) + ATP + H2O = sn-glycerol 3-phosphate(in) + ADP + phosphate + H(+). Its function is as follows. Part of the ABC transporter complex UgpBAEC involved in sn-glycerol-3-phosphate (G3P) import. Responsible for energy coupling to the transport system. The protein is sn-glycerol-3-phosphate import ATP-binding protein UgpC of Psychromonas ingrahamii (strain DSM 17664 / CCUG 51855 / 37).